A 180-amino-acid polypeptide reads, in one-letter code: Large ribosomal subunit protein uL6 (180 aa).

This sequence belongs to the universal ribosomal protein uL6 family. As to quaternary structure, part of the 50S ribosomal subunit.

This protein binds to the 23S rRNA, and is important in its secondary structure. It is located near the subunit interface in the base of the L7/L12 stalk, and near the tRNA binding site of the peptidyltransferase center. This chain is Large ribosomal subunit protein uL6, found in Salinispora tropica (strain ATCC BAA-916 / DSM 44818 / JCM 13857 / NBRC 105044 / CNB-440).